A 713-amino-acid chain; its full sequence is Peroxisomal biogenesis factor 8 (713 aa).

Residues 1–31 (MYRLGSQGRSIQSQLQNGDSSSGRPLQLQGT) form a disordered region. Over residues 7 to 30 (QGRSIQSQLQNGDSSSGRPLQLQG) the composition is skewed to polar residues. The Microbody targeting signal signature appears at 711–713 (AKL).

As to quaternary structure, interacts with PEX5 (via N-terminus).

The protein localises to the peroxisome membrane. Its function is as follows. Essential component of the machinery required for the import of both PTS1 and PTS2 (and perhaps all) peroxisomal matrix proteins. Binding of PEX8 to the N-terminus of PEX5 cargo receptor induces a conformational change of the TPR domains and decrease their binding affinity to cargo, facilitating the release of the PTS1 proteins within the peroxisome. The protein is Peroxisomal biogenesis factor 8 of Komagataella phaffii (strain GS115 / ATCC 20864) (Yeast).